A 348-amino-acid chain; its full sequence is Terpene cyclase ctvD (348 aa).

The helical transmembrane segment at 2–22 (ALSAYFLLCLSVLGLDAIYGF) threads the bilayer. A glycan (N-linked (GlcNAc...) asparagine) is linked at Asn51. 7 consecutive transmembrane segments (helical) span residues 77-97 (PGLS…WVAI), 116-136 (LFAM…WCAI), 161-181 (LIPI…LLPE), 191-211 (QIAI…HWGL), 235-255 (FAFV…LTLI), 283-303 (GLWF…LWAM), and 323-343 (LKVG…WLLW).

This sequence belongs to the membrane-bound ascI terpene cyclase family.

Its subcellular location is the membrane. The protein operates within mycotoxin biosynthesis. Functionally, hydrolase; part of the gene cluster that mediates the biosynthesis of citreoviridin, an inhibitor of the of F1-ATPase beta-subunit. The HR-PKS ctvA accepts acetyl-CoA as the starter unit and catalyzes eight iterations of malonyl-CoA extension and four iterations of SAM-dependent methylation at C4, C12, C14, and C16. The KR and DH domains selectively act on the first six iterations to generate the hexaene chain. In the last three iterations, the KR and DH domains terminate their functions to yield a beta,delta-diketo ester moiety, which then undergoes intramolecular cyclization to yield an alpha-pyrone intermediate. Subsequently, ctvB methylates the alpha-pyrone hydroxyl group to generate citreomontanin. In order to form the tetrahydrofuran ring with the correct stereochemistry, the terminal alkenes of citreomontanin need to undergo isomerization to yield a (17Z)-hexaene, a step that could be catalyzed by ctvC. The (17Z)-hexaene then undergoes bisepoxidation by ctvC to form a (17R,16R,15S,14R)-bisepoxide moiety. Lastly, ctvD acts as a regioselective hydrolase to form the tetrahydrofuran ring with the substituents in the correct absolute configuration, completing the biosynthesis of citreoviridin. This chain is Terpene cyclase ctvD, found in Aspergillus terreus (strain NIH 2624 / FGSC A1156).